Consider the following 962-residue polypeptide: UPF0182 protein SACE_1102 (962 aa).

7 helical membrane-spanning segments follow: residues I10–G30, L55–I75, L106–D126, F168–I188, I203–D223, V250–F270, and I279–L299. Disordered stretches follow at residues R707–Q730 and F876–K916. Pro residues predominate over residues G899–G910.

This sequence belongs to the UPF0182 family.

It localises to the cell membrane. The protein is UPF0182 protein SACE_1102 of Saccharopolyspora erythraea (strain ATCC 11635 / DSM 40517 / JCM 4748 / NBRC 13426 / NCIMB 8594 / NRRL 2338).